The primary structure comprises 163 residues: Phosphopantetheine adenylyltransferase (163 aa).

Thr10 contributes to the substrate binding site. ATP-binding positions include 10–11 and His18; that span reads TF. The substrate site is built by Lys42, Leu74, and Arg88. Residues 89–91, Glu99, and 124–130 contribute to the ATP site; these read GLR and NSFISST.

Belongs to the bacterial CoaD family. In terms of assembly, homohexamer. The cofactor is Mg(2+).

It is found in the cytoplasm. The enzyme catalyses (R)-4'-phosphopantetheine + ATP + H(+) = 3'-dephospho-CoA + diphosphate. It functions in the pathway cofactor biosynthesis; coenzyme A biosynthesis; CoA from (R)-pantothenate: step 4/5. Reversibly transfers an adenylyl group from ATP to 4'-phosphopantetheine, yielding dephospho-CoA (dPCoA) and pyrophosphate. This is Phosphopantetheine adenylyltransferase from Shewanella oneidensis (strain ATCC 700550 / JCM 31522 / CIP 106686 / LMG 19005 / NCIMB 14063 / MR-1).